The chain runs to 891 residues: MQMTTFLNINQIRTTFIEFFKKYGHHYASSSSLVPGNDPSLFFVNAGIVQFKDYVRAPETSKYSRVVTCQKCVRAGGKHNDLESVGYTARHHTFFEMLGNFSFGEDNAKADFMQLIWSFLTKELFIDEDRLIVTVYHTDHETAKLWRSIAGLDDSRIIRIKTDDNFWSMGPVGPCGPCTEIFYDHGDKIPGGLPGTKDENGGRYVEIWNIVFMQYEQLNESTRVELAKRCIDTGAGLERIATVLQGVYDNYDIDLFKNLIANIEHLTKIKSVGEANFSHRIIADHLRASAFLIADGVMPSNDGRGYVLRRIMRRAMNQIHQLGCKEPVMHQLVPGLINEMGDFYKELRIRQELITYLLRNEEEKFKTTLSKGLKLLEEESKNLTSGSQLSGHIAFKLYDTYGFPFDLTQDILKKRSISINKTEFDQNMLEQQNRARQLWKGQGSNKEQLLLEKLKEEFRATEFVGYSLYQAEGIVISLIQDNQYVEYIDINQVDDNNKEFWLITNQTPFYGQSGGQMGDIGIIKNNECTIHVTDTIKLFGCTHVHICKIVSGKININAVVHMAIDKQYRTQLQIHHSATHILHAALREILGNHIIQKGSLVAYDYLRFDVSHPTSISREILTKIENRVNEIILNNTAVKLMIMPFDQAIAHGAVALFEEKYGDEVRAISIGETSDARYYSFELCGGTHVKYTGDIGAFRILSESAIAAGVRRVEAIAGKHVIKQARRNSELLDLIAEKFSVTKQTIMSKIDGIIEENNLLKKQLHQLKYNQLILCEKDIQNIADDIGTIKLVYKNIEDYDLQIVRKAVSNTTKNIKNLVMVVISNNDKKNTIIIGVSDNITNKIQANNLVKEIINYLGGSGGGSATLAQIGCQYTCKLLDLKNIICKLLAT.

H576, H580, C684, and H688 together coordinate Zn(2+).

Belongs to the class-II aminoacyl-tRNA synthetase family. Zn(2+) is required as a cofactor.

It is found in the cytoplasm. It carries out the reaction tRNA(Ala) + L-alanine + ATP = L-alanyl-tRNA(Ala) + AMP + diphosphate. Its function is as follows. Catalyzes the attachment of alanine to tRNA(Ala) in a two-step reaction: alanine is first activated by ATP to form Ala-AMP and then transferred to the acceptor end of tRNA(Ala). Also edits incorrectly charged Ser-tRNA(Ala) and Gly-tRNA(Ala) via its editing domain. The polypeptide is Alanine--tRNA ligase (Orientia tsutsugamushi (strain Boryong) (Rickettsia tsutsugamushi)).